The sequence spans 48 residues: Omega-agatoxin-Aa5a (48 aa).

Intrachain disulfides connect C3–C16, C10–C21, C15–C32, and C23–C30.

This sequence belongs to the neurotoxin 02 (plectoxin) family. In terms of tissue distribution, expressed by the venom gland.

It is found in the secreted. The toxin blocks voltage-gated calcium channels in rat cerebellar granule cells (IC(50)=200 nM). This is Omega-agatoxin-Aa5a from Agelenopsis aperta (North American funnel-web spider).